A 509-amino-acid chain; its full sequence is ATP synthase subunit alpha (509 aa).

169–176 (GDRQTGKT) serves as a coordination point for ATP.

The protein belongs to the ATPase alpha/beta chains family. F-type ATPases have 2 components, CF(1) - the catalytic core - and CF(0) - the membrane proton channel. CF(1) has five subunits: alpha(3), beta(3), gamma(1), delta(1), epsilon(1). CF(0) has three main subunits: a(1), b(2) and c(9-12). The alpha and beta chains form an alternating ring which encloses part of the gamma chain. CF(1) is attached to CF(0) by a central stalk formed by the gamma and epsilon chains, while a peripheral stalk is formed by the delta and b chains.

The protein resides in the cell inner membrane. It carries out the reaction ATP + H2O + 4 H(+)(in) = ADP + phosphate + 5 H(+)(out). Produces ATP from ADP in the presence of a proton gradient across the membrane. The alpha chain is a regulatory subunit. The chain is ATP synthase subunit alpha from Agrobacterium fabrum (strain C58 / ATCC 33970) (Agrobacterium tumefaciens (strain C58)).